The chain runs to 485 residues: Glutamyl-tRNA(Gln) amidotransferase subunit A (485 aa).

Active-site charge relay system residues include lysine 78 and serine 153. Serine 177 acts as the Acyl-ester intermediate in catalysis.

This sequence belongs to the amidase family. GatA subfamily. Heterotrimer of A, B and C subunits.

The catalysed reaction is L-glutamyl-tRNA(Gln) + L-glutamine + ATP + H2O = L-glutaminyl-tRNA(Gln) + L-glutamate + ADP + phosphate + H(+). In terms of biological role, allows the formation of correctly charged Gln-tRNA(Gln) through the transamidation of misacylated Glu-tRNA(Gln) in organisms which lack glutaminyl-tRNA synthetase. The reaction takes place in the presence of glutamine and ATP through an activated gamma-phospho-Glu-tRNA(Gln). This chain is Glutamyl-tRNA(Gln) amidotransferase subunit A, found in Pelobacter propionicus (strain DSM 2379 / NBRC 103807 / OttBd1).